The sequence spans 122 residues: Histone H2B, gonadal (122 aa).

The tract at residues 1 to 31 is disordered; sequence MPPKVSSKGAKKAGKAKAARSGDKKRKRRRK. A compositionally biased stretch (basic residues) spans 9–31; it reads GAKKAGKAKAARSGDKKRKRRRK. An O-linked (GlcNAc) serine glycan is attached at Ser-109. Lys-117 participates in a covalent cross-link: Glycyl lysine isopeptide (Lys-Gly) (interchain with G-Cter in ubiquitin).

It belongs to the histone H2B family. As to quaternary structure, the nucleosome is a histone octamer containing two molecules each of H2A, H2B, H3 and H4 assembled in one H3-H4 heterotetramer and two H2A-H2B heterodimers. The octamer wraps approximately 147 bp of DNA. Monoubiquitination of Lys-117 gives a specific tag for epigenetic transcriptional activation and is also prerequisite for histone H3 'Lys-4' and 'Lys-79' methylation. In terms of processing, glcNAcylation at Ser-109 promotes monoubiquitination of Lys-117. It fluctuates in response to extracellular glucose, and associates with transcribed genes.

It localises to the nucleus. It is found in the chromosome. Functionally, core component of nucleosome. Nucleosomes wrap and compact DNA into chromatin, limiting DNA accessibility to the cellular machineries which require DNA as a template. Histones thereby play a central role in transcription regulation, DNA repair, DNA replication and chromosomal stability. DNA accessibility is regulated via a complex set of post-translational modifications of histones, also called histone code, and nucleosome remodeling. This Patella granatina (Sandpaper limpet) protein is Histone H2B, gonadal.